A 549-amino-acid polypeptide reads, in one-letter code: Cytoplasmic trehalase (549 aa).

Substrate contacts are provided by residues arginine 168, 175–176, asparagine 212, 221–223, 292–294, and glycine 324; these read WD, RSQ, and RDE. Catalysis depends on proton donor/acceptor residues aspartate 326 and glutamate 509. Residue glutamate 525 coordinates substrate.

Belongs to the glycosyl hydrolase 37 family. As to quaternary structure, monomer.

It localises to the cytoplasm. It catalyses the reaction alpha,alpha-trehalose + H2O = alpha-D-glucose + beta-D-glucose. It participates in glycan degradation; trehalose degradation; D-glucose from alpha,alpha-trehalose: step 1/1. In terms of biological role, hydrolyzes trehalose to glucose. Could be involved, in cells returning to low osmolarity conditions, in the utilization of the accumulated cytoplasmic trehalose, which was synthesized in response to high osmolarity. This Escherichia coli (strain 55989 / EAEC) protein is Cytoplasmic trehalase.